The chain runs to 209 residues: Kynurenine formamidase (209 aa).

Trp18 contacts substrate. 3 residues coordinate Zn(2+): His48, His52, and Asp54. Catalysis depends on His58, which acts as the Proton donor/acceptor. Zn(2+)-binding residues include His160 and Glu172.

It belongs to the Cyclase 1 superfamily. KynB family. In terms of assembly, homodimer. It depends on Zn(2+) as a cofactor.

The enzyme catalyses N-formyl-L-kynurenine + H2O = L-kynurenine + formate + H(+). The protein operates within amino-acid degradation; L-tryptophan degradation via kynurenine pathway; L-kynurenine from L-tryptophan: step 2/2. In terms of biological role, catalyzes the hydrolysis of N-formyl-L-kynurenine to L-kynurenine, the second step in the kynurenine pathway of tryptophan degradation. The sequence is that of Kynurenine formamidase from Paraburkholderia phymatum (strain DSM 17167 / CIP 108236 / LMG 21445 / STM815) (Burkholderia phymatum).